A 316-amino-acid polypeptide reads, in one-letter code: Ribosomal RNA small subunit methyltransferase H (316 aa).

Residues 35-37 (AGH), Asp-55, Phe-84, Asp-105, and Gln-112 contribute to the S-adenosyl-L-methionine site.

Belongs to the methyltransferase superfamily. RsmH family.

It localises to the cytoplasm. The enzyme catalyses cytidine(1402) in 16S rRNA + S-adenosyl-L-methionine = N(4)-methylcytidine(1402) in 16S rRNA + S-adenosyl-L-homocysteine + H(+). Functionally, specifically methylates the N4 position of cytidine in position 1402 (C1402) of 16S rRNA. In Streptococcus pneumoniae (strain Hungary19A-6), this protein is Ribosomal RNA small subunit methyltransferase H.